Here is a 433-residue protein sequence, read N- to C-terminus: Glutamate-1-semialdehyde 2,1-aminomutase (433 aa).

Lys-271 carries the N6-(pyridoxal phosphate)lysine modification.

This sequence belongs to the class-III pyridoxal-phosphate-dependent aminotransferase family. HemL subfamily. Homodimer. Pyridoxal 5'-phosphate serves as cofactor.

It is found in the cytoplasm. It carries out the reaction (S)-4-amino-5-oxopentanoate = 5-aminolevulinate. Its pathway is porphyrin-containing compound metabolism; protoporphyrin-IX biosynthesis; 5-aminolevulinate from L-glutamyl-tRNA(Glu): step 2/2. It participates in porphyrin-containing compound metabolism; chlorophyll biosynthesis. This is Glutamate-1-semialdehyde 2,1-aminomutase from Prochlorococcus marinus (strain SARG / CCMP1375 / SS120).